The primary structure comprises 225 residues: Elongation factor 1-beta (225 aa).

The GST C-terminal domain maps to Met-1–Ser-90. Lys-7 carries the post-translational modification N6-acetyllysine. Phosphoserine is present on residues Ser-8 and Ser-42. A disordered region spans residues Tyr-79–Asp-98. Phosphothreonine is present on residues Thr-88 and Thr-93. Phosphoserine occurs at positions 95 and 106. Lys-147 is covalently cross-linked (Glycyl lysine isopeptide (Lys-Gly) (interchain with G-Cter in SUMO2)). Ser-174 carries the post-translational modification Phosphoserine.

This sequence belongs to the EF-1-beta/EF-1-delta family. EF-1 is composed of 4 subunits: alpha, beta (alpha subunit of the eEF1B subcomplex), delta (beta subunit of the eEF1B subcomplex), and gamma (gamma subunit of the eEF1B subcomplex). Interacts with elongation factor EEF1A1.

Functionally, catalytic subunit of the guanine nucleotide exchange factor (GEF) (eEF1B subcomplex) of the eukaryotic elongation factor 1 complex (eEF1). Stimulates the exchange of GDP for GTP on elongation factor 1A (eEF1A), probably by displacing GDP from the nucleotide binding pocket in eEF1A. The polypeptide is Elongation factor 1-beta (EEF1B) (Sus scrofa (Pig)).